We begin with the raw amino-acid sequence, 527 residues long: Amine oxidase [flavin-containing] A (527 aa).

An N-acetylmethionine modification is found at Met-1. At 1–497 (MENQEKASIA…HTFWERNLPS (497 aa)) the chain is on the cytoplasmic side. At Ser-383 the chain carries Phosphoserine. S-8alpha-FAD cysteine is present on Cys-406. The chain crosses the membrane as a helical; Anchor for type IV membrane protein span at residues 498-518 (VSGLLKIIGFSTSVTALGFVL). The Mitochondrial intermembrane segment spans residues 519 to 527 (YKYKLLPRS). The interval 520-522 (KYK) is interaction with membrane phospholipid headgroups.

Belongs to the flavin monoamine oxidase family. Monomer, homo- or heterodimer (containing two subunits of similar size). Each subunit contains a covalently bound flavin. Enzymatically active as monomer. It depends on FAD as a cofactor.

The protein localises to the mitochondrion outer membrane. The catalysed reaction is a secondary aliphatic amine + O2 + H2O = a primary amine + an aldehyde + H2O2. It catalyses the reaction a primary methyl amine + O2 + H2O = an aldehyde + H2O2 + NH4(+). It carries out the reaction (R)-adrenaline + O2 + H2O = (R)-3,4-dihydroxymandelaldehyde + methylamine + H2O2. The enzyme catalyses dopamine + O2 + H2O = 3,4-dihydroxyphenylacetaldehyde + H2O2 + NH4(+). The catalysed reaction is tyramine + O2 + H2O = (4-hydroxyphenyl)acetaldehyde + H2O2 + NH4(+). It catalyses the reaction (R)-noradrenaline + O2 + H2O = (R)-3,4-dihydroxymandelaldehyde + H2O2 + NH4(+). It carries out the reaction serotonin + O2 + H2O = (5-hydroxyindol-3-yl)acetaldehyde + H2O2 + NH4(+). The enzyme catalyses kynuramine + O2 + H2O = 3-(2-aminophenyl)-3-oxopropanal + H2O2 + NH4(+). The catalysed reaction is tryptamine + O2 + H2O = indole-3-acetaldehyde + H2O2 + NH4(+). It catalyses the reaction 2-phenylethylamine + O2 + H2O = 2-phenylacetaldehyde + H2O2 + NH4(+). Functionally, catalyzes the oxidative deamination of primary and some secondary amine such as neurotransmitters, with concomitant reduction of oxygen to hydrogen peroxide and has important functions in the metabolism of neuroactive and vasoactive amines in the central nervous system and peripheral tissues. Preferentially oxidizes serotonin. Also catalyzes the oxidative deamination of kynuramine to 3-(2-aminophenyl)-3-oxopropanal that can spontaneously condense to 4-hydroxyquinoline. This is Amine oxidase [flavin-containing] A from Pongo abelii (Sumatran orangutan).